The sequence spans 384 residues: MAKHLFTSESVSEGHPDKIADQISDAVLDAILEQDPKARVACETYVKTGMVLVGGEITTNAWVDIEELTRKTVADIGYVSSDMGFDANSCAVLSAIGKQSPDINQGVDRCDPLEQGAGDQGIMFGYATNETDVLMPAPITYAHRLMERQARVRKNGTLPWLRPDAKSQVTFQYDDGKIAGIDAVVLSTQHADTISQKDLQEAVMEEIIKPVLPAEWLSASTKYFINPTGRFVIGGPMGDCGLTGRKIIVDTYGGAARHGGGAFSGKDPSKVDRSAAYAARYVAKNIVAAGLADRCEIQVSYAIGVAEPTSIMIETFGTEKIDQEHLIQLVREFFDLRPYGLIQMLDLIQPIYRQTAAYGHFGREQFPWEKTDKAALLREAAGLK.

Histidine 15 contributes to the ATP binding site. Residue aspartate 17 participates in Mg(2+) binding. Glutamate 43 is a K(+) binding site. L-methionine contacts are provided by glutamate 56 and glutamine 99. Residues 99 to 109 (QSPDINQGVDR) are flexible loop. ATP-binding positions include 164 to 166 (DAK), 230 to 231 (RF), aspartate 239, 245 to 246 (RK), alanine 262, and lysine 266. Position 239 (aspartate 239) interacts with L-methionine. Lysine 270 serves as a coordination point for L-methionine.

This sequence belongs to the AdoMet synthase family. As to quaternary structure, homotetramer; dimer of dimers. Mg(2+) is required as a cofactor. It depends on K(+) as a cofactor.

It is found in the cytoplasm. The enzyme catalyses L-methionine + ATP + H2O = S-adenosyl-L-methionine + phosphate + diphosphate. It participates in amino-acid biosynthesis; S-adenosyl-L-methionine biosynthesis; S-adenosyl-L-methionine from L-methionine: step 1/1. Catalyzes the formation of S-adenosylmethionine (AdoMet) from methionine and ATP. The overall synthetic reaction is composed of two sequential steps, AdoMet formation and the subsequent tripolyphosphate hydrolysis which occurs prior to release of AdoMet from the enzyme. The polypeptide is S-adenosylmethionine synthase (Edwardsiella ictaluri (strain 93-146)).